We begin with the raw amino-acid sequence, 106 residues long: Secreted RxLR effector protein 18 (106 aa).

The first 17 residues, 1 to 17 (MRGSTAMLLAAIALFSS), serve as a signal peptide directing secretion. The RxLR-dEER signature appears at 28–39 (RTLRSFEELEER).

It belongs to the RxLR effector family.

Its subcellular location is the secreted. It is found in the host cell. In terms of biological role, effector that may act as a suppressor of cell death to interrupt plant immunity. I. This chain is Secreted RxLR effector protein 18, found in Plasmopara viticola (Downy mildew of grapevine).